We begin with the raw amino-acid sequence, 218 residues long: N-(5'-phosphoribosyl)anthranilate isomerase (218 aa).

Belongs to the TrpF family.

The enzyme catalyses N-(5-phospho-beta-D-ribosyl)anthranilate = 1-(2-carboxyphenylamino)-1-deoxy-D-ribulose 5-phosphate. It functions in the pathway amino-acid biosynthesis; L-tryptophan biosynthesis; L-tryptophan from chorismate: step 3/5. This is N-(5'-phosphoribosyl)anthranilate isomerase from Stenotrophomonas maltophilia (strain K279a).